Here is a 208-residue protein sequence, read N- to C-terminus: Uracil phosphoribosyltransferase (208 aa).

5-phospho-alpha-D-ribose 1-diphosphate is bound by residues R78, R103, and 130-138 (DPMFATGGT). Uracil-binding positions include I193 and 198–200 (GDA). Position 199 (D199) interacts with 5-phospho-alpha-D-ribose 1-diphosphate.

The protein belongs to the UPRTase family. Mg(2+) serves as cofactor.

It carries out the reaction UMP + diphosphate = 5-phospho-alpha-D-ribose 1-diphosphate + uracil. The protein operates within pyrimidine metabolism; UMP biosynthesis via salvage pathway; UMP from uracil: step 1/1. Its activity is regulated as follows. Allosterically activated by GTP. Its function is as follows. Catalyzes the conversion of uracil and 5-phospho-alpha-D-ribose 1-diphosphate (PRPP) to UMP and diphosphate. The sequence is that of Uracil phosphoribosyltransferase from Campylobacter jejuni subsp. jejuni serotype O:2 (strain ATCC 700819 / NCTC 11168).